The chain runs to 189 residues: Probable pericyclase scpY (189 aa).

This sequence belongs to the pericyclase pydY family.

It participates in mycotoxin biosynthesis. In terms of biological role, probable pericyclase; part of the gene scp cluster that mediates the biosynthesis of a hirsutellone-like compound that has still to be identified. This chain is Probable pericyclase scpY, found in Mollisia scopiformis (Conifer needle endophyte fungus).